The sequence spans 171 residues: uncharacterized protein (171 aa).

Its function is as follows. Required for production of the bacteriocin SkfA. This is an uncharacterized protein from Bacillus subtilis (strain 168).